Reading from the N-terminus, the 549-residue chain is Dihydroxy-acid dehydratase (549 aa).

Asp78 is a Mg(2+) binding site. Cys119 is a binding site for [2Fe-2S] cluster. Mg(2+) is bound by residues Asp120 and Lys121. Position 121 is an N6-carboxylysine (Lys121). Cys191 contacts [2Fe-2S] cluster. Glu441 serves as a coordination point for Mg(2+). The Proton acceptor role is filled by Ser466.

The protein belongs to the IlvD/Edd family. Homodimer. [2Fe-2S] cluster serves as cofactor. Mg(2+) is required as a cofactor.

It catalyses the reaction (2R)-2,3-dihydroxy-3-methylbutanoate = 3-methyl-2-oxobutanoate + H2O. The catalysed reaction is (2R,3R)-2,3-dihydroxy-3-methylpentanoate = (S)-3-methyl-2-oxopentanoate + H2O. It functions in the pathway amino-acid biosynthesis; L-isoleucine biosynthesis; L-isoleucine from 2-oxobutanoate: step 3/4. It participates in amino-acid biosynthesis; L-valine biosynthesis; L-valine from pyruvate: step 3/4. In terms of biological role, functions in the biosynthesis of branched-chain amino acids. Catalyzes the dehydration of (2R,3R)-2,3-dihydroxy-3-methylpentanoate (2,3-dihydroxy-3-methylvalerate) into 2-oxo-3-methylpentanoate (2-oxo-3-methylvalerate) and of (2R)-2,3-dihydroxy-3-methylbutanoate (2,3-dihydroxyisovalerate) into 2-oxo-3-methylbutanoate (2-oxoisovalerate), the penultimate precursor to L-isoleucine and L-valine, respectively. The polypeptide is Dihydroxy-acid dehydratase (Methanobrevibacter smithii (strain ATCC 35061 / DSM 861 / OCM 144 / PS)).